Reading from the N-terminus, the 104-residue chain is Pyrimidine/purine nucleoside phosphorylase (104 aa).

Belongs to the nucleoside phosphorylase PpnP family.

It catalyses the reaction a purine D-ribonucleoside + phosphate = a purine nucleobase + alpha-D-ribose 1-phosphate. The enzyme catalyses adenosine + phosphate = alpha-D-ribose 1-phosphate + adenine. It carries out the reaction cytidine + phosphate = cytosine + alpha-D-ribose 1-phosphate. The catalysed reaction is guanosine + phosphate = alpha-D-ribose 1-phosphate + guanine. It catalyses the reaction inosine + phosphate = alpha-D-ribose 1-phosphate + hypoxanthine. The enzyme catalyses thymidine + phosphate = 2-deoxy-alpha-D-ribose 1-phosphate + thymine. It carries out the reaction uridine + phosphate = alpha-D-ribose 1-phosphate + uracil. The catalysed reaction is xanthosine + phosphate = alpha-D-ribose 1-phosphate + xanthine. In terms of biological role, catalyzes the phosphorolysis of diverse nucleosides, yielding D-ribose 1-phosphate and the respective free bases. Can use uridine, adenosine, guanosine, cytidine, thymidine, inosine and xanthosine as substrates. Also catalyzes the reverse reactions. The polypeptide is Pyrimidine/purine nucleoside phosphorylase (Colwellia psychrerythraea (strain 34H / ATCC BAA-681) (Vibrio psychroerythus)).